The sequence spans 527 residues: Type II methyltransferase M.XamI (527 aa).

Belongs to the N(4)/N(6)-methyltransferase family.

It carries out the reaction a 2'-deoxyadenosine in DNA + S-adenosyl-L-methionine = an N(6)-methyl-2'-deoxyadenosine in DNA + S-adenosyl-L-homocysteine + H(+). Its function is as follows. A gamma subtype methylase that recognizes the double-stranded sequence 5'-GTCGAC-3', possibly methylates A-5 on both strands, and protects the DNA from cleavage by the XamI endonuclease. This chain is Type II methyltransferase M.XamI, found in Xanthomonas campestris pv. amaranthicola.